Consider the following 141-residue polypeptide: Nucleoside diphosphate kinase (141 aa).

Residues Lys-11, Phe-59, Arg-87, Thr-93, Arg-104, and Asn-114 each coordinate ATP. His-117 acts as the Pros-phosphohistidine intermediate in catalysis.

It belongs to the NDK family. Homotetramer. The cofactor is Mg(2+).

Its subcellular location is the cytoplasm. It carries out the reaction a 2'-deoxyribonucleoside 5'-diphosphate + ATP = a 2'-deoxyribonucleoside 5'-triphosphate + ADP. The enzyme catalyses a ribonucleoside 5'-diphosphate + ATP = a ribonucleoside 5'-triphosphate + ADP. Major role in the synthesis of nucleoside triphosphates other than ATP. The ATP gamma phosphate is transferred to the NDP beta phosphate via a ping-pong mechanism, using a phosphorylated active-site intermediate. The protein is Nucleoside diphosphate kinase of Azoarcus sp. (strain BH72).